Reading from the N-terminus, the 383-residue chain is Chaperone protein DnaJ (383 aa).

The 66-residue stretch at 6 to 71 (DYYEVLGVSK…QKRSQYDQFG (66 aa)) folds into the J domain. The CR-type zinc-finger motif lies at 141–223 (GVEKKVKVKK…CKGEGVEIGE (83 aa)). Positions 154, 157, 171, 174, 197, 200, 211, and 214 each coordinate Zn(2+). CXXCXGXG motif repeat units lie at residues 154-161 (CSKCRGDG), 171-178 (CQTCHGTG), 197-204 (CPTCHGEG), and 211-218 (CSKCKGEG).

The protein belongs to the DnaJ family. In terms of assembly, homodimer. Requires Zn(2+) as cofactor.

The protein resides in the cytoplasm. In terms of biological role, participates actively in the response to hyperosmotic and heat shock by preventing the aggregation of stress-denatured proteins and by disaggregating proteins, also in an autonomous, DnaK-independent fashion. Unfolded proteins bind initially to DnaJ; upon interaction with the DnaJ-bound protein, DnaK hydrolyzes its bound ATP, resulting in the formation of a stable complex. GrpE releases ADP from DnaK; ATP binding to DnaK triggers the release of the substrate protein, thus completing the reaction cycle. Several rounds of ATP-dependent interactions between DnaJ, DnaK and GrpE are required for fully efficient folding. Also involved, together with DnaK and GrpE, in the DNA replication of plasmids through activation of initiation proteins. This Porphyromonas gingivalis (strain ATCC BAA-308 / W83) protein is Chaperone protein DnaJ.